The primary structure comprises 969 residues: Leucine--tRNA ligase (969 aa).

The 'HIGH' region motif lies at 45 to 55; the sequence is PYTNAPLHIGH. A 'KMSKS' region motif is present at residues 649-653; that stretch reads KMSKS. Residue Lys-652 coordinates ATP.

Belongs to the class-I aminoacyl-tRNA synthetase family.

The protein localises to the cytoplasm. The catalysed reaction is tRNA(Leu) + L-leucine + ATP = L-leucyl-tRNA(Leu) + AMP + diphosphate. The sequence is that of Leucine--tRNA ligase from Staphylothermus marinus (strain ATCC 43588 / DSM 3639 / JCM 9404 / F1).